Reading from the N-terminus, the 355-residue chain is Holliday junction branch migration complex subunit RuvB (355 aa).

The disordered stretch occupies residues 1-26 (MSIQTDDFASSSPAARRVVSTAPASP). Positions 5-196 (TDDFASSSPA…FGIVARLEFY (192 aa)) are large ATPase domain (RuvB-L). Residues 9 to 22 (ASSSPAARRVVSTA) show a composition bias toward low complexity. ATP-binding positions include leucine 35, arginine 36, glycine 77, lysine 80, threonine 81, threonine 82, 143 to 145 (EDY), arginine 186, tyrosine 196, and arginine 233. Residue threonine 81 participates in Mg(2+) binding. A small ATPAse domain (RuvB-S) region spans residues 197–267 (SVEELARIVT…IADKALAMLD (71 aa)). Residues 270 to 355 (PQGFDVMDRK…TTSGSELFDA (86 aa)) are head domain (RuvB-H). Arginine 325 and arginine 330 together coordinate DNA.

Belongs to the RuvB family. In terms of assembly, homohexamer. Forms an RuvA(8)-RuvB(12)-Holliday junction (HJ) complex. HJ DNA is sandwiched between 2 RuvA tetramers; dsDNA enters through RuvA and exits via RuvB. An RuvB hexamer assembles on each DNA strand where it exits the tetramer. Each RuvB hexamer is contacted by two RuvA subunits (via domain III) on 2 adjacent RuvB subunits; this complex drives branch migration. In the full resolvosome a probable DNA-RuvA(4)-RuvB(12)-RuvC(2) complex forms which resolves the HJ.

The protein localises to the cytoplasm. The enzyme catalyses ATP + H2O = ADP + phosphate + H(+). The RuvA-RuvB-RuvC complex processes Holliday junction (HJ) DNA during genetic recombination and DNA repair, while the RuvA-RuvB complex plays an important role in the rescue of blocked DNA replication forks via replication fork reversal (RFR). RuvA specifically binds to HJ cruciform DNA, conferring on it an open structure. The RuvB hexamer acts as an ATP-dependent pump, pulling dsDNA into and through the RuvAB complex. RuvB forms 2 homohexamers on either side of HJ DNA bound by 1 or 2 RuvA tetramers; 4 subunits per hexamer contact DNA at a time. Coordinated motions by a converter formed by DNA-disengaged RuvB subunits stimulates ATP hydrolysis and nucleotide exchange. Immobilization of the converter enables RuvB to convert the ATP-contained energy into a lever motion, pulling 2 nucleotides of DNA out of the RuvA tetramer per ATP hydrolyzed, thus driving DNA branch migration. The RuvB motors rotate together with the DNA substrate, which together with the progressing nucleotide cycle form the mechanistic basis for DNA recombination by continuous HJ branch migration. Branch migration allows RuvC to scan DNA until it finds its consensus sequence, where it cleaves and resolves cruciform DNA. This chain is Holliday junction branch migration complex subunit RuvB, found in Methylibium petroleiphilum (strain ATCC BAA-1232 / LMG 22953 / PM1).